The following is a 383-amino-acid chain: Na(+)/H(+) antiporter NhaA (383 aa).

11 helical membrane passes run 10 to 30 (LIGG…NNSP), 56 to 76 (LMHW…GLEI), 91 to 111 (IITP…IYLS), 121 to 141 (GWAI…ALLG), 150 to 170 (LLVI…IAIF), 174 to 194 (SLSL…IICN), 206 to 226 (VVLG…ATLA), 254 to 274 (PWII…ISFS), 275 to 295 (GISF…GLFV), 327 to 347 (GISL…VLAF), and 355 to 375 (AIKI…YIVL).

It belongs to the NhaA Na(+)/H(+) (TC 2.A.33) antiporter family.

Its subcellular location is the cell inner membrane. The catalysed reaction is Na(+)(in) + 2 H(+)(out) = Na(+)(out) + 2 H(+)(in). Na(+)/H(+) antiporter that extrudes sodium in exchange for external protons. The sequence is that of Na(+)/H(+) antiporter NhaA from Francisella tularensis subsp. novicida (strain U112).